A 969-amino-acid polypeptide reads, in one-letter code: Glycine dehydrogenase (decarboxylating) (969 aa).

Lysine 716 carries the N6-(pyridoxal phosphate)lysine modification.

The protein belongs to the GcvP family. As to quaternary structure, the glycine cleavage system is composed of four proteins: P, T, L and H. The cofactor is pyridoxal 5'-phosphate.

The enzyme catalyses N(6)-[(R)-lipoyl]-L-lysyl-[glycine-cleavage complex H protein] + glycine + H(+) = N(6)-[(R)-S(8)-aminomethyldihydrolipoyl]-L-lysyl-[glycine-cleavage complex H protein] + CO2. Its function is as follows. The glycine cleavage system catalyzes the degradation of glycine. The P protein binds the alpha-amino group of glycine through its pyridoxal phosphate cofactor; CO(2) is released and the remaining methylamine moiety is then transferred to the lipoamide cofactor of the H protein. The protein is Glycine dehydrogenase (decarboxylating) of Shewanella woodyi (strain ATCC 51908 / MS32).